Here is a 1040-residue protein sequence, read N- to C-terminus: Tudor domain-containing protein 5 (1040 aa).

HTH OST-type domains follow at residues 7-80 (IQDC…KAIP), 122-197 (VPPI…LKKS), and 291-365 (VDPE…FDAD). The Tudor domain occupies 533 to 592 (FIQPGHLCCVKISEDKWWYRVIIHRILGKKEVEVFYPDFGNIGTVQKSSLRFLKCCYTKL). Position 809 is a phosphoserine (serine 809). Disordered stretches follow at residues 857-891 (DVKG…YPLD) and 912-975 (AERS…AKDK). 2 stretches are compositionally biased toward polar residues: residues 872 to 891 (EKNT…YPLD) and 912 to 924 (AERS…SIQT). Serine 943 carries the post-translational modification Phosphoserine. The span at 946-956 (NHSGSVESSPG) shows a compositional bias: polar residues. A compositionally biased stretch (basic and acidic residues) spans 958–975 (LKKEDVSNSRAEATAKDK).

The protein belongs to the TDRD5 family. In terms of tissue distribution, gonad-specific. Mainly expressed in testis. Present at low level in ovary (at protein level).

The protein localises to the cytoplasm. Its function is as follows. Required during spermiogenesis to participate in the repression transposable elements and prevent their mobilization, which is essential for the germline integrity. Probably acts via the piRNA metabolic process, which mediates the repression of transposable elements during meiosis by forming complexes composed of piRNAs and Piwi proteins and govern the methylation and subsequent repression of transposons. Required for chromatoid body (CB) assembly. The protein is Tudor domain-containing protein 5 (Tdrd5) of Mus musculus (Mouse).